We begin with the raw amino-acid sequence, 498 residues long: Calcium uptake protein, mitochondrial (498 aa).

The N-terminal 29 residues, 1 to 29 (MPALSHYRSVSSLPSVDRSFLLIQRLRIH), are a transit peptide targeting the mitochondrion. EF-hand domains lie at 216-241 (EFFM…VTLL), 243-278 (IPES…MRSQ), 329-364 (LTEE…AADA), and 437-472 (LSDN…RERD). Positions 222, 224, 226, 233, 256, 258, 260, 262, and 267 each coordinate Ca(2+). Positions 450, 452, 454, 456, and 461 each coordinate Ca(2+).

Belongs to the MICU1 family. MICU1 subfamily. Expressed in both green and non-green tissues, including roots, shoots, floral buds and pollen.

It is found in the mitochondrion inner membrane. The protein localises to the mitochondrion intermembrane space. Calcium-binding protein maintaining matrix calcium levels at low concentration. Regulates mitochondrial calcium dynamics in planta by restricting influx. The polypeptide is Calcium uptake protein, mitochondrial (Arabidopsis thaliana (Mouse-ear cress)).